The sequence spans 118 residues: V-type proton ATPase subunit G 1 (118 aa).

A2 is subject to N-acetylalanine. Positions 55 to 90 are disordered; the sequence is FQSKQQAAMGSQGNLSAEVEQATRRQVQGMQSSQQR. 2 stretches are compositionally biased toward polar residues: residues 56–69 and 78–89; these read QSKQQAAMGSQGNL and RRQVQGMQSSQQ.

Belongs to the V-ATPase G subunit family. As to quaternary structure, V-ATPase is a heteromultimeric enzyme made up of two complexes: the ATP-hydrolytic V1 complex and the proton translocation V0 complex. The V1 complex consists of three catalytic AB heterodimers that form a heterohexamer, three peripheral stalks each consisting of EG heterodimers, one central rotor including subunits D and F, and the regulatory subunits C and H. The proton translocation complex V0 consists of the proton transport subunit a, a ring of proteolipid subunits c9c'', rotary subunit d, subunits e and f, and the accessory subunits ATP6AP1/Ac45 and ATP6AP2/PRR.

It localises to the apical cell membrane. In terms of biological role, subunit of the V1 complex of vacuolar(H+)-ATPase (V-ATPase), a multisubunit enzyme composed of a peripheral complex (V1) that hydrolyzes ATP and a membrane integral complex (V0) that translocates protons. V-ATPase is responsible for acidifying and maintaining the pH of intracellular compartments and in some cell types, is targeted to the plasma membrane, where it is responsible for acidifying the extracellular environment. In aerobic conditions, involved in intracellular iron homeostasis, thus triggering the activity of Fe(2+) prolyl hydroxylase (PHD) enzymes, and leading to HIF1A hydroxylation and subsequent proteasomal degradation. The polypeptide is V-type proton ATPase subunit G 1 (ATP6V1G1) (Canis lupus familiaris (Dog)).